We begin with the raw amino-acid sequence, 497 residues long: Glycerol kinase (497 aa).

Thr-13 is an ADP binding site. ATP contacts are provided by Thr-13, Thr-14, and Ser-15. A sn-glycerol 3-phosphate-binding site is contributed by Thr-13. Arg-17 contributes to the ADP binding site. Residues Arg-83, Glu-84, and Tyr-135 each contribute to the sn-glycerol 3-phosphate site. 3 residues coordinate glycerol: Arg-83, Glu-84, and Tyr-135. His-231 carries the post-translational modification Phosphohistidine; by HPr. Asp-245 contributes to the sn-glycerol 3-phosphate binding site. Glycerol-binding residues include Asp-245 and Gln-246. ADP is bound by residues Thr-267 and Gly-310. 4 residues coordinate ATP: Thr-267, Gly-310, Gln-314, and Gly-411. 2 residues coordinate ADP: Gly-411 and Asn-415.

It belongs to the FGGY kinase family. In terms of assembly, homotetramer and homodimer (in equilibrium). Post-translationally, the phosphoenolpyruvate-dependent sugar phosphotransferase system (PTS), including enzyme I, and histidine-containing protein (HPr) are required for the phosphorylation, which leads to the activation of the enzyme.

It catalyses the reaction glycerol + ATP = sn-glycerol 3-phosphate + ADP + H(+). Its pathway is polyol metabolism; glycerol degradation via glycerol kinase pathway; sn-glycerol 3-phosphate from glycerol: step 1/1. Activated by phosphorylation and inhibited by fructose 1,6-bisphosphate (FBP). Functionally, key enzyme in the regulation of glycerol uptake and metabolism. Catalyzes the phosphorylation of glycerol to yield sn-glycerol 3-phosphate. This Listeria welshimeri serovar 6b (strain ATCC 35897 / DSM 20650 / CCUG 15529 / CIP 8149 / NCTC 11857 / SLCC 5334 / V8) protein is Glycerol kinase.